The chain runs to 387 residues: Protein-glutamate methylesterase/protein-glutamine glutaminase 2 (387 aa).

In terms of domain architecture, Response regulatory spans K4–L121. Position 55 is a 4-aspartylphosphate (D55). Residues A148–A183 show a composition bias toward low complexity. The interval A148–K199 is disordered. Residues P192–E384 form the CheB-type methylesterase domain. Catalysis depends on residues S211, H238, and D331.

The protein belongs to the CheB family. In terms of processing, phosphorylated by CheA. Phosphorylation of the N-terminal regulatory domain activates the methylesterase activity.

It localises to the cytoplasm. The catalysed reaction is [protein]-L-glutamate 5-O-methyl ester + H2O = L-glutamyl-[protein] + methanol + H(+). The enzyme catalyses L-glutaminyl-[protein] + H2O = L-glutamyl-[protein] + NH4(+). Its function is as follows. Involved in chemotaxis. Part of a chemotaxis signal transduction system that modulates chemotaxis in response to various stimuli. Catalyzes the demethylation of specific methylglutamate residues introduced into the chemoreceptors (methyl-accepting chemotaxis proteins or MCP) by CheR. Also mediates the irreversible deamidation of specific glutamine residues to glutamic acid. In Pseudomonas savastanoi pv. phaseolicola (strain 1448A / Race 6) (Pseudomonas syringae pv. phaseolicola (strain 1448A / Race 6)), this protein is Protein-glutamate methylesterase/protein-glutamine glutaminase 2.